The sequence spans 250 residues: 5'-nucleotidase SurE (250 aa).

Residues aspartate 8, aspartate 9, serine 40, and asparagine 94 each contribute to the a divalent metal cation site.

Belongs to the SurE nucleotidase family. A divalent metal cation is required as a cofactor.

The protein resides in the cytoplasm. It carries out the reaction a ribonucleoside 5'-phosphate + H2O = a ribonucleoside + phosphate. Nucleotidase that shows phosphatase activity on nucleoside 5'-monophosphates. This is 5'-nucleotidase SurE from Wolbachia sp. subsp. Brugia malayi (strain TRS).